Reading from the N-terminus, the 267-residue chain is uncharacterized protein (267 aa).

Positions 2-198 constitute an ABC transporter domain; the sequence is LGANGAGKTT…FRNKFIVIEG (197 aa). ATP is bound at residue 3–10; it reads GANGAGKT.

Belongs to the ABC transporter superfamily.

This is an uncharacterized protein from Alkalihalophilus pseudofirmus (strain ATCC BAA-2126 / JCM 17055 / OF4) (Bacillus pseudofirmus).